Consider the following 291-residue polypeptide: Oxidative stress-responsive serine-rich protein 1 (291 aa).

The interval 48–174 is disordered; it reads EDAKPKSACA…SSDAPQVSQA (127 aa). Positions 65 to 83 are enriched in basic residues; it reads STRKSSRGAVRTQRRRRSK. The segment covering 132 to 142 has biased composition (polar residues); it reads ECSSSLDTNHT. Thr142 and Thr232 each carry phosphothreonine.

The protein is Oxidative stress-responsive serine-rich protein 1 (OSER1) of Bos taurus (Bovine).